A 165-amino-acid polypeptide reads, in one-letter code: UPF0303 protein Bcep18194_A4700 (165 aa).

This sequence belongs to the UPF0303 family.

The polypeptide is UPF0303 protein Bcep18194_A4700 (Burkholderia lata (strain ATCC 17760 / DSM 23089 / LMG 22485 / NCIMB 9086 / R18194 / 383)).